The following is a 1460-amino-acid chain: DNA-binding protein RFX7 (1460 aa).

Residues 1–34 (MAEEQQQPPPQQPDAHQQLPPSAPNSGVALPALV) form a disordered region. Residues 108–183 (AFSWIRNTLE…YCYSGLRKKA (76 aa)) constitute a DNA-binding region (RFX-type winged-helix). A PxLPxI/L motif; mediates interaction with ANKRA2 and RFXANK motif is present at residues 188 to 193 (PTLPNL). Residues 308-352 (QRKIQKKQQEQKLQSPLPGESAAKKSESATSNGVTNLPNGNPSIL) form a disordered region. Ser-322 carries the phosphoserine modification. Over residues 337–352 (TSNGVTNLPNGNPSIL) the composition is skewed to polar residues. Residue Ser-379 is modified to Phosphoserine. The span at 404-416 (SVKQAPKTPQNVP) shows a compositional bias: polar residues. Residues 404-428 (SVKQAPKTPQNVPASPGGDRSARHR) form a disordered region. Ser-418 and Ser-455 each carry phosphoserine. Over residues 481–513 (TPSNSNTPLKHSASVSSATGTTEESRSVPQIKN) the composition is skewed to polar residues. Disordered stretches follow at residues 481-585 (TPSN…PSNE), 632-715 (TFTS…AQIP), and 917-1015 (QSVT…SVPP). The span at 515–535 (SVVSLQSPGSRSSSAGGTSAV) shows a compositional bias: low complexity. Over residues 537–549 (VKVEPETSSDEHP) the composition is skewed to basic and acidic residues. Polar residues-rich tracts occupy residues 563–583 (QTPSALLGQKSNTDGALQKPS) and 632–644 (TFTSSSSPPNGDS). Thr-564 carries the post-translational modification Phosphothreonine. Ser-662 carries the post-translational modification Phosphoserine. Residue Lys-704 is modified to N6-acetyllysine. Polar residues-rich tracts occupy residues 705 to 715 (TEGSTAGAQIP) and 917 to 933 (QSVTPGAPMSSHTSSTH). Over residues 947 to 963 (TPTPTPTPTPTPTPTPT) the composition is skewed to pro residues. A compositionally biased stretch (polar residues) spans 971 to 1009 (GSQSLSRESPCSRLAQTTPVDSALGSSRHTPIGTPHSNC). Thr-988 is modified (phosphothreonine). Residues Ser-1178 and Ser-1329 each carry the phosphoserine modification.

The protein belongs to the RFX family. Interacts (via PxLPxI/L motif) with RFXANK (via ankyrin repeats). Interacts (via PxLPxI/L motif) with ANKRA2 (via ankyrin repeats). Widely expressed in many different tissue types including thymus and placenta, with high expression in brain. Expressed in both inhibitory and excitatory neurons in cortex.

Its subcellular location is the nucleus. Transcription factor. Acts as a transcriptional activator by binding to promoter regions of target genes, such as PDCD4, PIK3IP1, MXD4, PNRC1, and RFX5. Plays a role in natural killer (NK) cell maintenance and immunity. May play a role in the process of ciliogenesis in the neural tube and neural tube closure. The protein is DNA-binding protein RFX7 of Homo sapiens (Human).